The sequence spans 88 residues: MMTAEKKKEIIAKFQQHEGDTGSPEVQIALLTERITYLTEHFKTHKKDHHSRRGLLKMVGQRRALLNYLKDMDFNRYRKIISDLGLRR.

This sequence belongs to the universal ribosomal protein uS15 family. Part of the 30S ribosomal subunit. Forms a bridge to the 50S subunit in the 70S ribosome, contacting the 23S rRNA.

In terms of biological role, one of the primary rRNA binding proteins, it binds directly to 16S rRNA where it helps nucleate assembly of the platform of the 30S subunit by binding and bridging several RNA helices of the 16S rRNA. Functionally, forms an intersubunit bridge (bridge B4) with the 23S rRNA of the 50S subunit in the ribosome. This is Small ribosomal subunit protein uS15 from Desulfitobacterium hafniense (strain Y51).